The sequence spans 715 residues: Methionine--tRNA ligase (715 aa).

The 'HIGH' region motif lies at 20-30 (PYANGKAHIGH). Zn(2+) contacts are provided by cysteine 151, cysteine 154, cysteine 163, and cysteine 167. The 'KMSKS' region motif lies at 334–338 (KFSKT). Lysine 337 contributes to the ATP binding site. The disordered stretch occupies residues 559 to 593 (ANAKRNGVKGGEKEPSKSEGMGPSEASKASEKTVD). Positions 613–715 (DFAKLDIRVG…KEIKSGSRIR (103 aa)) constitute a tRNA-binding domain.

It belongs to the class-I aminoacyl-tRNA synthetase family. MetG type 1 subfamily. Homodimer. It depends on Zn(2+) as a cofactor.

It localises to the cytoplasm. It catalyses the reaction tRNA(Met) + L-methionine + ATP = L-methionyl-tRNA(Met) + AMP + diphosphate. Functionally, is required not only for elongation of protein synthesis but also for the initiation of all mRNA translation through initiator tRNA(fMet) aminoacylation. The chain is Methionine--tRNA ligase from Methanosarcina mazei (strain ATCC BAA-159 / DSM 3647 / Goe1 / Go1 / JCM 11833 / OCM 88) (Methanosarcina frisia).